We begin with the raw amino-acid sequence, 337 residues long: 4-hydroxythreonine-4-phosphate dehydrogenase (337 aa).

2 residues coordinate substrate: His138 and Thr139. A divalent metal cation contacts are provided by His168, His212, and His267. Substrate contacts are provided by Lys275, Asn284, and Arg293.

This sequence belongs to the PdxA family. In terms of assembly, homodimer. Zn(2+) is required as a cofactor. Mg(2+) serves as cofactor. It depends on Co(2+) as a cofactor.

The protein localises to the cytoplasm. The catalysed reaction is 4-(phosphooxy)-L-threonine + NAD(+) = 3-amino-2-oxopropyl phosphate + CO2 + NADH. Its pathway is cofactor biosynthesis; pyridoxine 5'-phosphate biosynthesis; pyridoxine 5'-phosphate from D-erythrose 4-phosphate: step 4/5. In terms of biological role, catalyzes the NAD(P)-dependent oxidation of 4-(phosphooxy)-L-threonine (HTP) into 2-amino-3-oxo-4-(phosphooxy)butyric acid which spontaneously decarboxylates to form 3-amino-2-oxopropyl phosphate (AHAP). This is 4-hydroxythreonine-4-phosphate dehydrogenase from Beijerinckia indica subsp. indica (strain ATCC 9039 / DSM 1715 / NCIMB 8712).